The primary structure comprises 210 residues: MRVKICGITQAEQGQAIAALGATALGFICVERSPRYINAQKIQPIIQTLPTTVDSIGVFANASLTDIEGVLKVAQLTAIQLHGEETPEFCTQVKQLFPHLEIIKAFRIKTSKSLVNICEYVEVIDTLLLDAYDPHQLGGTGKTLNWDLLRNFHPGRPWFLAGGLTPDNVLHALEGLSPDGIDLSSGVERSPGDKDILKVTQLLENLRKIN.

This sequence belongs to the TrpF family.

It carries out the reaction N-(5-phospho-beta-D-ribosyl)anthranilate = 1-(2-carboxyphenylamino)-1-deoxy-D-ribulose 5-phosphate. Its pathway is amino-acid biosynthesis; L-tryptophan biosynthesis; L-tryptophan from chorismate: step 3/5. This Crocosphaera subtropica (strain ATCC 51142 / BH68) (Cyanothece sp. (strain ATCC 51142)) protein is N-(5'-phosphoribosyl)anthranilate isomerase.